Reading from the N-terminus, the 127-residue chain is Ribonuclease P protein component 1 (127 aa).

This sequence belongs to the eukaryotic/archaeal RNase P protein component 1 family. Consists of a catalytic RNA component and at least 4-5 protein subunits.

Its subcellular location is the cytoplasm. It catalyses the reaction Endonucleolytic cleavage of RNA, removing 5'-extranucleotides from tRNA precursor.. In terms of biological role, part of ribonuclease P, a protein complex that generates mature tRNA molecules by cleaving their 5'-ends. The sequence is that of Ribonuclease P protein component 1 from Pyrococcus abyssi (strain GE5 / Orsay).